The following is a 182-amino-acid chain: MHIDMGMLVLIFIINFAYITLNTVRFLLVMRGYRYFAAFASVIEITIYVLGLSLVLNRLNNPINLVVYALGYGVGVYVGMVIEDRLALGYTMISVILPDPKSSLPGVLRENGFGVTQHAAYGLEGERLELEILAPRKNERRLYGLIKDAAPNAFVIAYEPRYISGGFWLKRVKRRNARRKKQ.

3 helical membrane-spanning segments follow: residues M1–L21, F36–L56, and P62–I82.

It belongs to the UPF0316 family.

It localises to the cell membrane. This Lactiplantibacillus plantarum (strain ATCC BAA-793 / NCIMB 8826 / WCFS1) (Lactobacillus plantarum) protein is UPF0316 protein lp_1140.